A 102-amino-acid polypeptide reads, in one-letter code: MAAIPMHHGLLLAAILFALGMIGILVRRNLIFILMSIEIMLNAAGLAFVVAGSHWTQADGQVMFIFILSVAAAEVSVGLALLLLLHRRFQTLDADAVSKMRG.

A run of 3 helical transmembrane segments spans residues Met6 to Val26, Leu30 to Val50, and Phe64 to Leu84.

This sequence belongs to the complex I subunit 4L family. As to quaternary structure, NDH-1 is composed of 14 different subunits. Subunits NuoA, H, J, K, L, M, N constitute the membrane sector of the complex.

The protein resides in the cell inner membrane. It catalyses the reaction a quinone + NADH + 5 H(+)(in) = a quinol + NAD(+) + 4 H(+)(out). NDH-1 shuttles electrons from NADH, via FMN and iron-sulfur (Fe-S) centers, to quinones in the respiratory chain. The immediate electron acceptor for the enzyme in this species is believed to be ubiquinone. Couples the redox reaction to proton translocation (for every two electrons transferred, four hydrogen ions are translocated across the cytoplasmic membrane), and thus conserves the redox energy in a proton gradient. The protein is NADH-quinone oxidoreductase subunit K of Nitrosospira multiformis (strain ATCC 25196 / NCIMB 11849 / C 71).